Consider the following 122-residue polypeptide: U19-hexatoxin-Hi1a (122 aa).

An N-terminal signal peptide occupies residues 1 to 18 (MNTMIGFIVLLVSATVLG). The propeptide occupies 19 to 80 (DPELDALRKE…YENSNFREKR (62 aa)). 3 disulfides stabilise this stretch: Cys81–Cys96, Cys88–Cys101, and Cys95–Cys116.

As to expression, expressed by the venom gland.

The protein resides in the secreted. Probable ion channel inhibitor. The sequence is that of U19-hexatoxin-Hi1a from Hadronyche infensa (Fraser island funnel-web spider).